A 432-amino-acid chain; its full sequence is Adenylosuccinate synthetase (432 aa).

Residues 13–19 (GDEGKGK) and 41–43 (GHT) each bind GTP. Asp14 acts as the Proton acceptor in catalysis. Mg(2+) contacts are provided by Asp14 and Gly41. IMP-binding positions include 14–17 (DEGK), 39–42 (NAGH), Thr130, Arg144, Gln225, Thr240, and Arg304. His42 (proton donor) is an active-site residue. 300–306 (ATTGRRR) is a binding site for substrate. GTP is bound by residues Arg306, 332 to 334 (KLD), and 415 to 417 (STG).

It belongs to the adenylosuccinate synthetase family. Homodimer. Mg(2+) serves as cofactor.

It is found in the cytoplasm. The enzyme catalyses IMP + L-aspartate + GTP = N(6)-(1,2-dicarboxyethyl)-AMP + GDP + phosphate + 2 H(+). It functions in the pathway purine metabolism; AMP biosynthesis via de novo pathway; AMP from IMP: step 1/2. Functionally, plays an important role in the de novo pathway of purine nucleotide biosynthesis. Catalyzes the first committed step in the biosynthesis of AMP from IMP. The sequence is that of Adenylosuccinate synthetase from Escherichia coli (strain K12).